Reading from the N-terminus, the 394-residue chain is MSFLGTPYSNGATRAMLLGSGELGKEVAIELQRLGVEVIAVDRYANAPAMQVAHRSHVISMLDGEALSQLVQQEKPHFIIPEIEAIATETLQKLEQEGFNVVPTALATRLTMDREGIRRLAAETLKLPTSPYFFAETEAEYQQAVEQIGFPCVIKPVMSSSGKGQSVVRKADQVAVAWQYAQEGGRAGRGRVIVEGFVPFDYEITLLTVSAVDGIHFCAPIGHRQEDGDYRESWQPQVMSDALLEKSQHVAREVVKALGGYGLFGVELFIKGDEVYFSEVSPRPHDTGMVTLISQDMSEFALHVRAILGLPIGKITQYGPAASAVVLREGNSTDIRYGNLPAALAQIPGAQLRLFGKPEIAGRRRLGVALVRAENVELAIEQAKQVAAAVDVKF.

N(1)-(5-phospho-beta-D-ribosyl)glycinamide contacts are provided by residues 22-23 and E82; that span reads EL. ATP is bound by residues R114, K155, 160–165, 195–198, and E203; these read SSGKGQ and EGFV. Residues 119–308 form the ATP-grasp domain; that stretch reads RLAAETLKLP…EFALHVRAIL (190 aa). 2 residues coordinate Mg(2+): E267 and E279. Residues D286, K357, and 364–365 each bind N(1)-(5-phospho-beta-D-ribosyl)glycinamide; that span reads RR.

Belongs to the PurK/PurT family. In terms of assembly, homodimer.

The catalysed reaction is N(1)-(5-phospho-beta-D-ribosyl)glycinamide + formate + ATP = N(2)-formyl-N(1)-(5-phospho-beta-D-ribosyl)glycinamide + ADP + phosphate + H(+). Its pathway is purine metabolism; IMP biosynthesis via de novo pathway; N(2)-formyl-N(1)-(5-phospho-D-ribosyl)glycinamide from N(1)-(5-phospho-D-ribosyl)glycinamide (formate route): step 1/1. Involved in the de novo purine biosynthesis. Catalyzes the transfer of formate to 5-phospho-ribosyl-glycinamide (GAR), producing 5-phospho-ribosyl-N-formylglycinamide (FGAR). Formate is provided by PurU via hydrolysis of 10-formyl-tetrahydrofolate. The chain is Formate-dependent phosphoribosylglycinamide formyltransferase from Tolumonas auensis (strain DSM 9187 / NBRC 110442 / TA 4).